A 365-amino-acid polypeptide reads, in one-letter code: Outer membrane protein assembly factor BamC (365 aa).

The N-terminal stretch at 1–19 (MKHNRLAIAALAPVLILVG) is a signal peptide. A lipid anchor (N-palmitoyl cysteine) is attached at cysteine 20. The S-diacylglycerol cysteine moiety is linked to residue cysteine 20.

This sequence belongs to the BamC family. As to quaternary structure, part of the Bam complex.

Its subcellular location is the cell outer membrane. In terms of biological role, part of the outer membrane protein assembly complex, which is involved in assembly and insertion of beta-barrel proteins into the outer membrane. This is Outer membrane protein assembly factor BamC from Ferrimonas balearica (strain DSM 9799 / CCM 4581 / KCTC 23876 / PAT).